The following is a 160-amino-acid chain: Cytochrome b6-f complex subunit 4 (160 aa).

The next 3 membrane-spanning stretches (helical) occupy residues 36–56 (ILFT…GLAI), 95–115 (LLGI…PFIE), and 131–151 (AVFL…CFPI).

The protein belongs to the cytochrome b family. PetD subfamily. The 4 large subunits of the cytochrome b6-f complex are cytochrome b6, subunit IV (17 kDa polypeptide, PetD), cytochrome f and the Rieske protein, while the 4 small subunits are PetG, PetL, PetM and PetN. The complex functions as a dimer.

The protein resides in the cellular thylakoid membrane. In terms of biological role, component of the cytochrome b6-f complex, which mediates electron transfer between photosystem II (PSII) and photosystem I (PSI), cyclic electron flow around PSI, and state transitions. The sequence is that of Cytochrome b6-f complex subunit 4 from Picosynechococcus sp. (strain ATCC 27264 / PCC 7002 / PR-6) (Agmenellum quadruplicatum).